A 221-amino-acid polypeptide reads, in one-letter code: Inositol phosphorylceramide synthase regulatory subunit KEI1 (221 aa).

Helical transmembrane passes span 11 to 31, 54 to 74, 79 to 99, and 154 to 174; these read SFLG…ISIL, WIAY…LYLI, LLVF…TCFF, and ILIT…LASF. Residues 176-221 are COPI vesicle-binding; that stretch reads QELLHHPKYLVDRDDVEQNLKNKPIWKRLWAKSQKGCYKLCKNLLE.

The protein belongs to the KEI1 family. Component of the inositol phosphorylceramide synthase complex composed of at least AUR1 and KEI1. Interacts (via C-terminal region) with COP1 and SEC21. Note=The interaction with AUR1 seems to occur with the full-length protein before cleavage by KEX2 since both full-length and short chains of KEI1 interact with AUR1. Post-translationally, the precursor protein is cleaved into two polypeptide chains, KEI1N and KEI1C. The cleavage is performed in the Golgi apparatus by the KEX2 protease which recognizes residue Arg-135. Generation of KEX2 cleavage site may have been an accidental event in evolution without specific advantages or disadvantages in IPC synthesis.

Its subcellular location is the golgi apparatus membrane. Regulatory component of the inositol phosphorylceramide (ICP) synthase which catalyzes the addition of a phosphorylinositol group onto ceramide to form inositol phosphorylceramide, an essential step in sphingolipid biosynthesis. Helps the medial Golgi localization of IPC synthase in a COPI vesicle-dependent manner. The protein is Inositol phosphorylceramide synthase regulatory subunit KEI1 (KEI1) of Saccharomyces cerevisiae (strain ATCC 204508 / S288c) (Baker's yeast).